The sequence spans 128 residues: uncharacterized protein (128 aa).

The protein localises to the mitochondrion. This is an uncharacterized protein from Saccharomyces cerevisiae (strain ATCC 204508 / S288c) (Baker's yeast).